The primary structure comprises 1235 residues: Ubiquitin carboxyl-terminal hydrolase 40 (1235 aa).

The 442-residue stretch at 41 to 482 (SGIRNQGGTC…SAYMLFYRKS (442 aa)) folds into the USP domain. The active-site Nucleophile is cysteine 50. Catalysis depends on histidine 305, which acts as the Proton acceptor. The segment covering 1180–1190 (IRDDTGKEKQK) has biased composition (basic and acidic residues). Residues 1180–1235 (IRDDTGKEKQKQRALGRRKSQEALHEQSSYILSSAETPARPRAPETSLSIHVGSFR) form a disordered region. The span at 1205 to 1215 (EQSSYILSSAE) shows a compositional bias: polar residues.

The protein belongs to the peptidase C19 family. As to expression, broadly expressed.

It carries out the reaction Thiol-dependent hydrolysis of ester, thioester, amide, peptide and isopeptide bonds formed by the C-terminal Gly of ubiquitin (a 76-residue protein attached to proteins as an intracellular targeting signal).. In terms of biological role, may be catalytically inactive. In Homo sapiens (Human), this protein is Ubiquitin carboxyl-terminal hydrolase 40 (USP40).